The following is a 207-amino-acid chain: Thiamine-phosphate synthase (207 aa).

Residues 37 to 41 and N69 contribute to the 4-amino-2-methyl-5-(diphosphooxymethyl)pyrimidine site; that span reads QLREK. Mg(2+)-binding residues include D70 and D89. Position 108 (S108) interacts with 4-amino-2-methyl-5-(diphosphooxymethyl)pyrimidine. A 2-[(2R,5Z)-2-carboxy-4-methylthiazol-5(2H)-ylidene]ethyl phosphate-binding site is contributed by 134-136; the sequence is TGS. Residue K137 coordinates 4-amino-2-methyl-5-(diphosphooxymethyl)pyrimidine. Residues G165 and 185 to 186 contribute to the 2-[(2R,5Z)-2-carboxy-4-methylthiazol-5(2H)-ylidene]ethyl phosphate site; that span reads IS.

The protein belongs to the thiamine-phosphate synthase family. Mg(2+) is required as a cofactor.

It carries out the reaction 2-[(2R,5Z)-2-carboxy-4-methylthiazol-5(2H)-ylidene]ethyl phosphate + 4-amino-2-methyl-5-(diphosphooxymethyl)pyrimidine + 2 H(+) = thiamine phosphate + CO2 + diphosphate. It catalyses the reaction 2-(2-carboxy-4-methylthiazol-5-yl)ethyl phosphate + 4-amino-2-methyl-5-(diphosphooxymethyl)pyrimidine + 2 H(+) = thiamine phosphate + CO2 + diphosphate. The catalysed reaction is 4-methyl-5-(2-phosphooxyethyl)-thiazole + 4-amino-2-methyl-5-(diphosphooxymethyl)pyrimidine + H(+) = thiamine phosphate + diphosphate. Its pathway is cofactor biosynthesis; thiamine diphosphate biosynthesis; thiamine phosphate from 4-amino-2-methyl-5-diphosphomethylpyrimidine and 4-methyl-5-(2-phosphoethyl)-thiazole: step 1/1. Its function is as follows. Condenses 4-methyl-5-(beta-hydroxyethyl)thiazole monophosphate (THZ-P) and 2-methyl-4-amino-5-hydroxymethyl pyrimidine pyrophosphate (HMP-PP) to form thiamine monophosphate (TMP). The polypeptide is Thiamine-phosphate synthase (Desulfitobacterium hafniense (strain Y51)).